The chain runs to 244 residues: Phosphoadenosine 5'-phosphosulfate reductase (244 aa).

Cysteine 239 serves as the catalytic Nucleophile; cysteine thiosulfonate intermediate.

It belongs to the PAPS reductase family. CysH subfamily.

It localises to the cytoplasm. It carries out the reaction [thioredoxin]-disulfide + sulfite + adenosine 3',5'-bisphosphate + 2 H(+) = [thioredoxin]-dithiol + 3'-phosphoadenylyl sulfate. It functions in the pathway sulfur metabolism; hydrogen sulfide biosynthesis; sulfite from sulfate: step 3/3. In terms of biological role, catalyzes the formation of sulfite from phosphoadenosine 5'-phosphosulfate (PAPS) using thioredoxin as an electron donor. This chain is Phosphoadenosine 5'-phosphosulfate reductase, found in Escherichia coli (strain K12 / MC4100 / BW2952).